The primary structure comprises 380 residues: 3-isopropylmalate dehydratase large subunit (380 aa).

[4Fe-4S] cluster contacts are provided by C262, C320, and C323.

Belongs to the aconitase/IPM isomerase family. LeuC type 2 subfamily. Heterodimer of LeuC and LeuD. Requires [4Fe-4S] cluster as cofactor.

It catalyses the reaction (2R,3S)-3-isopropylmalate = (2S)-2-isopropylmalate. It functions in the pathway amino-acid biosynthesis; L-leucine biosynthesis; L-leucine from 3-methyl-2-oxobutanoate: step 2/4. Catalyzes the isomerization between 2-isopropylmalate and 3-isopropylmalate, via the formation of 2-isopropylmaleate. The sequence is that of 3-isopropylmalate dehydratase large subunit from Pyrococcus horikoshii (strain ATCC 700860 / DSM 12428 / JCM 9974 / NBRC 100139 / OT-3).